The primary structure comprises 319 residues: uncharacterized protein (319 aa).

The segment at 281-319 is disordered; it reads KVERKQRRRDDQNIMRSKLPQQRQNPFCSTERPKRARCD. A compositionally biased stretch (polar residues) spans 299-308; the sequence is LPQQRQNPFC.

It is found in the cytoplasm. The protein localises to the nucleus. This is an uncharacterized protein from Saccharomyces cerevisiae (strain ATCC 204508 / S288c) (Baker's yeast).